A 134-amino-acid chain; its full sequence is Large ribosomal subunit protein eL27 (134 aa).

The KOW domain occupies 5 to 40; the sequence is LKSGKVVVVLSGRFAGKKAVIVRNFDDGTSSRPYGH.

This sequence belongs to the eukaryotic ribosomal protein eL27 family.

The polypeptide is Large ribosomal subunit protein eL27 (RPL27) (Pyrobotrys stellatus (Green alga)).